The primary structure comprises 199 residues: Peroxynitrite isomerase (199 aa).

Positions G20–G26 match the GXWXGXG motif. H190 contacts heme b.

It belongs to the nitrobindin family. In terms of assembly, homodimer. Heme b serves as cofactor.

It catalyses the reaction peroxynitrite = nitrate. Its pathway is nitrogen metabolism. Its function is as follows. Heme-binding protein able to scavenge peroxynitrite and to protect free L-tyrosine against peroxynitrite-mediated nitration, by acting as a peroxynitrite isomerase that converts peroxynitrite to nitrate. Therefore, this protein likely plays a role in peroxynitrite sensing and in the detoxification of reactive nitrogen and oxygen species (RNS and ROS, respectively). Is able to bind nitric oxide (NO) in vitro, but may act as a sensor of peroxynitrite levels in vivo. In Clavibacter michiganensis subsp. michiganensis (strain NCPPB 382), this protein is Peroxynitrite isomerase.